A 524-amino-acid chain; its full sequence is Serine/threonine-protein kinase PAK 2 (524 aa).

The interval 1 to 81 is disordered; it reads MSDNGELEDK…PEISPPSDFE (81 aa). Ser-2 is subject to N-acetylserine. A phosphoserine mark is found at Ser-2, Ser-20, Ser-55, Ser-58, and Ser-59. Residue Thr-60 is modified to Phosphothreonine. Lys-62 carries the post-translational modification N6-acetyllysine. The residue at position 64 (Ser-64) is a Phosphoserine. Residues 67 to 81 are compositionally biased toward basic and acidic residues; sequence KEKERPEISPPSDFE. The segment at 69-112 is GTPase-binding; sequence KERPEISPPSDFEHTIHVGFDAVTGEFTGMPEQWARLLQTSNIT. The autoregulatory region stretch occupies residues 69-137; that stretch reads KERPEISPPS…KFYDSNTVKQ (69 aa). One can recognise a CRIB domain in the interval 74 to 87; it reads ISPPSDFEHTIHVG. The segment at 88-248 is linker; sequence FDAVTGEFTG…IVSIGDPKKK (161 aa). Lys-128 is subject to N6-acetyllysine. Thr-134 is modified (phosphothreonine). Tyr-139 carries the phosphotyrosine modification. Ser-141 is subject to Phosphoserine. The tract at residues 142 to 190 is disordered; the sequence is FTPPEKDGFPSGTPALNTKGSETSAVVTEEDDDDEDAAPPVIAPRPDHT. Thr-143 carries the phosphothreonine modification. Ser-152 carries the post-translational modification Phosphoserine. Phosphothreonine is present on residues Thr-154, Thr-159, and Thr-169. Residues 155–167 show a composition bias toward polar residues; the sequence is PALNTKGSETSAV. The segment covering 169–178 has biased composition (acidic residues); the sequence is TEEDDDDEDA. Residue Ser-197 is modified to Phosphoserine. A disordered region spans residues 204-228; sequence APVGDSNVDSGAKSSDKQKKKAKMT. The Nuclear localization signal signature appears at 245–251; sequence PKKKYTR. Residues 249–500 enclose the Protein kinase domain; the sequence is YTRYEKIGQG…AKELLQHPFL (252 aa). Residues 255–263 and Lys-278 each bind ATP; that span reads IGQGASGTV. The active-site Proton acceptor is Asp-368. Thr-402 carries the phosphothreonine; by autocatalysis modification.

It belongs to the protein kinase superfamily. STE Ser/Thr protein kinase family. STE20 subfamily. Interacts tightly with GTP-bound but not GDP-bound CDC42/p21 and RAC1. Interacts with SH3MD4. Interacts with SCRIB. Interacts with ARHGEF7 and GIT1. PAK-2p34 interacts with ARHGAP10. Interacts with RAC1. Full-length PAK2 is autophosphorylated when activated by CDC42/p21. Following cleavage, both peptides, PAK-2p27 and PAK-2p34, become highly autophosphorylated. Autophosphorylation of PAK-2p27 can occur in the absence of any effectors and is dependent on phosphorylation of Thr-402, because PAK-2p27 is acting as an exogenous substrate. In terms of processing, during apoptosis proteolytically cleaved by caspase-3 or caspase-3-like proteases to yield active PAK-2p34. Post-translationally, ubiquitinated, leading to its proteasomal degradation.

It is found in the cytoplasm. The protein resides in the nucleus. The protein localises to the perinuclear region. It localises to the membrane. The catalysed reaction is L-seryl-[protein] + ATP = O-phospho-L-seryl-[protein] + ADP + H(+). It catalyses the reaction L-threonyl-[protein] + ATP = O-phospho-L-threonyl-[protein] + ADP + H(+). With respect to regulation, activated by binding small G proteins. Binding of GTP-bound CDC42 or RAC1 to the autoregulatory region releases monomers from the autoinhibited dimer, enables phosphorylation of Thr-402 and allows the kinase domain to adopt an active structure. Following caspase cleavage, autophosphorylated PAK-2p34 is constitutively active. In terms of biological role, serine/threonine protein kinase that plays a role in a variety of different signaling pathways including cytoskeleton regulation, cell motility, cell cycle progression, apoptosis or proliferation. Acts as a downstream effector of the small GTPases CDC42 and RAC1. Activation by the binding of active CDC42 and RAC1 results in a conformational change and a subsequent autophosphorylation on several serine and/or threonine residues. Full-length PAK2 stimulates cell survival and cell growth. Phosphorylates MAPK4 and MAPK6 and activates the downstream target MAPKAPK5, a regulator of F-actin polymerization and cell migration. Phosphorylates JUN and plays an important role in EGF-induced cell proliferation. Phosphorylates many other substrates including histone H4 to promote assembly of H3.3 and H4 into nucleosomes, BAD, ribosomal protein S6, or MBP. Phosphorylates CASP7, thereby preventing its activity. Additionally, associates with ARHGEF7 and GIT1 to perform kinase-independent functions such as spindle orientation control during mitosis. On the other hand, apoptotic stimuli such as DNA damage lead to caspase-mediated cleavage of PAK2, generating PAK-2p34, an active p34 fragment that translocates to the nucleus and promotes cellular apoptosis involving the JNK signaling pathway. Caspase-activated PAK2 phosphorylates MKNK1 and reduces cellular translation. This is Serine/threonine-protein kinase PAK 2 (Pak2) from Rattus norvegicus (Rat).